The chain runs to 429 residues: Glucose-1-phosphate adenylyltransferase (429 aa).

Alpha-D-glucose 1-phosphate-binding positions include glycine 162, glutamate 177 to lysine 178, and serine 209.

This sequence belongs to the bacterial/plant glucose-1-phosphate adenylyltransferase family. In terms of assembly, homotetramer.

The enzyme catalyses alpha-D-glucose 1-phosphate + ATP + H(+) = ADP-alpha-D-glucose + diphosphate. It participates in glycan biosynthesis; glycogen biosynthesis. Involved in the biosynthesis of ADP-glucose, a building block required for the elongation reactions to produce glycogen. Catalyzes the reaction between ATP and alpha-D-glucose 1-phosphate (G1P) to produce pyrophosphate and ADP-Glc. The protein is Glucose-1-phosphate adenylyltransferase of Nostoc punctiforme (strain ATCC 29133 / PCC 73102).